The chain runs to 93 residues: UPF0521 protein B (93 aa).

Positions 2–58 (SLKEVITSLKNDFHSINKEIDSMKENNEKQEEKIFQEIKKLKLEMELLRKDNLSFKT) form a coiled coil.

The protein belongs to the UPF0521 family.

In Dictyostelium discoideum (Social amoeba), this protein is UPF0521 protein B.